A 606-amino-acid chain; its full sequence is Radial spoke head protein 3 homolog (606 aa).

The disordered stretch occupies residues 1 to 103; sequence MARSEARRQA…NSPEAPPLDG (103 aa). Basic and acidic residues predominate over residues 15-46; sequence PRAVPEERALRERRQPRPRREPLESGAGDHRR. Thr331 bears the Phosphothreonine; by MAPK1 mark. Residues 393-429 are a coiled coil; the sequence is AYEELRNIELAEVQRLEEQERRHREEKERRKQQQWQV. Residues 520–606 form a disordered region; sequence EGRHASVRPE…KSSKREELSQ (87 aa). The segment covering 547–556 has biased composition (polar residues); the sequence is SQDQGASQAQ. Positions 572 to 604 form a coiled coil; the sequence is ARYAERVSSQERRLAEENDELTEMRKSSKREEL. Residues 573 to 606 are compositionally biased toward basic and acidic residues; the sequence is RYAERVSSQERRLAEENDELTEMRKSSKREELSQ.

The protein belongs to the flagellar radial spoke RSP3 family. In terms of assembly, component of the axonemal radial spoke 1 (RS1) and 2 (RS2) complexes, at least composed of spoke head proteins RSPH1, RSPH3, RSPH9 and the cilia-specific component RSPH4A or sperm-specific component RSPH6A, spoke stalk proteins RSPH14, DNAJB13, DYDC1, ROPN1L and NME5, and the RS1 complex-specific anchor protein IQUB. Interacts with IQUB. Interacts with phosphorylated MAPK1. Interacts with MEK1. Interacts with PKA regulatory subunits PRKAR1A and PRKAR1B. Interacts with RSPH1. Interacts with RSPH4A. Interacts with RSPH6A. Interacts with RSPH9. Interacts with LRRC23.

The protein resides in the cytoplasm. Its subcellular location is the cytoskeleton. It localises to the cilium axoneme. The protein localises to the flagellum axoneme. In terms of biological role, functions as part of axonemal radial spoke complexes that play an important part in the motility of sperm and cilia. Functions as a protein kinase A-anchoring protein that scaffolds the cAMP-dependent protein kinase holoenzyme. May serve as a point of convergence for MAPK and PKA signaling in cilia. This is Radial spoke head protein 3 homolog (RSPH3) from Bos taurus (Bovine).